Here is a 296-residue protein sequence, read N- to C-terminus: CTD kinase subunit gamma (296 aa).

Residues Arg-25–Asn-44 are disordered. Residues Thr-29–Ser-39 are compositionally biased toward low complexity. Residue Thr-35 is modified to Phosphothreonine.

Belongs to the CTK3 family. As to quaternary structure, CTDK-I consists of three subunits, CTK1, CTK2 and CTK3 (also called alpha, beta and gamma). Interacts with CTK1. Heterodimerization with CTK2 is required to protect this subunit from degradation. In terms of processing, ubiquitinated. Ubiquitination leads to degradation by the 26S proteasome pathway.

The protein localises to the nucleus. Its subcellular location is the nucleolus. It is found in the cytoplasm. In terms of biological role, gamma subunit of the CTDK-I complex, which hyperphosphorylates the C-terminal heptapeptide repeat domain (CTD) of the largest RNA polymerase II subunit. CTDK-I phosphorylates 'Ser-5' if the CTD substrate is not phosphorylated at 'Ser-5', but will phosphorylate 'Ser-2' of a CTD substrate if 'Ser-5' is already phosphorylated. CTDK-I is also more reactive toward substrates that are prephosphorylated at 'Ser-2' or 'Ser-5' compared with an unphosphorylated CTD substrate, therefore efficiently creating doubly phosphorylated CTD repeats. Involved in RNA polymerase I transcription and RNA polymerase II transcriptional elongation, and as part of the CTDK-I complex, pre-mRNA 3'-end processing and SET2 mediated H3K36 methylation. Together with CTK2, required for CTK1 CTD kinase activation. Required for DNA damage induced transcription. Involved in the adaptation to alternative carbon sources, including galactose, glycerol and ethanol, but not raffinose. Required for the integrity of the rDNA locus. The sequence is that of CTD kinase subunit gamma (CTK3) from Saccharomyces cerevisiae (strain ATCC 204508 / S288c) (Baker's yeast).